The chain runs to 255 residues: Thiazole synthase (255 aa).

Lys-96 serves as the catalytic Schiff-base intermediate with DXP. Residues Gly-157, 183–184 (AG), and 205–206 (NT) contribute to the 1-deoxy-D-xylulose 5-phosphate site.

Belongs to the ThiG family. Homotetramer. Forms heterodimers with either ThiH or ThiS.

It localises to the cytoplasm. It catalyses the reaction [ThiS sulfur-carrier protein]-C-terminal-Gly-aminoethanethioate + 2-iminoacetate + 1-deoxy-D-xylulose 5-phosphate = [ThiS sulfur-carrier protein]-C-terminal Gly-Gly + 2-[(2R,5Z)-2-carboxy-4-methylthiazol-5(2H)-ylidene]ethyl phosphate + 2 H2O + H(+). It functions in the pathway cofactor biosynthesis; thiamine diphosphate biosynthesis. Functionally, catalyzes the rearrangement of 1-deoxy-D-xylulose 5-phosphate (DXP) to produce the thiazole phosphate moiety of thiamine. Sulfur is provided by the thiocarboxylate moiety of the carrier protein ThiS. In vitro, sulfur can be provided by H(2)S. The chain is Thiazole synthase from Staphylococcus epidermidis (strain ATCC 12228 / FDA PCI 1200).